We begin with the raw amino-acid sequence, 239 residues long: 1-(5-phosphoribosyl)-5-[(5-phosphoribosylamino)methylideneamino] imidazole-4-carboxamide isomerase (239 aa).

D8 (proton acceptor) is an active-site residue. D129 serves as the catalytic Proton donor.

Belongs to the HisA/HisF family.

Its subcellular location is the cytoplasm. The catalysed reaction is 1-(5-phospho-beta-D-ribosyl)-5-[(5-phospho-beta-D-ribosylamino)methylideneamino]imidazole-4-carboxamide = 5-[(5-phospho-1-deoxy-D-ribulos-1-ylimino)methylamino]-1-(5-phospho-beta-D-ribosyl)imidazole-4-carboxamide. It participates in amino-acid biosynthesis; L-histidine biosynthesis; L-histidine from 5-phospho-alpha-D-ribose 1-diphosphate: step 4/9. The protein is 1-(5-phosphoribosyl)-5-[(5-phosphoribosylamino)methylideneamino] imidazole-4-carboxamide isomerase of Pelagibacter ubique (strain HTCC1062).